The primary structure comprises 82 residues: MIRIEILFDRQSTKNLKSGTLQALQNEIEQRLKPHYPEIWLRIDQGSAPSVSVTGARNDKDKERILSLLEEIWQDDSWLPAA.

The protein belongs to the DinI family.

In terms of biological role, the imp operon is involved in UV protection and mutation, however the ImpC protein is not essential for these functions. This is Protein ImpC (impC) from Salmonella typhimurium.